A 691-amino-acid chain; its full sequence is Elongation factor G (691 aa).

The tr-type G domain occupies 8 to 282; that stretch reads ERVRNIGIAA…AVVNYLPAPV (275 aa). Residues 17–24, 81–85, and 135–138 contribute to the GTP site; these read AHIDAGKT, DTPGH, and NKMD.

Belongs to the TRAFAC class translation factor GTPase superfamily. Classic translation factor GTPase family. EF-G/EF-2 subfamily.

The protein resides in the cytoplasm. Its function is as follows. Catalyzes the GTP-dependent ribosomal translocation step during translation elongation. During this step, the ribosome changes from the pre-translocational (PRE) to the post-translocational (POST) state as the newly formed A-site-bound peptidyl-tRNA and P-site-bound deacylated tRNA move to the P and E sites, respectively. Catalyzes the coordinated movement of the two tRNA molecules, the mRNA and conformational changes in the ribosome. This is Elongation factor G from Prochlorococcus marinus (strain NATL1A).